A 203-amino-acid polypeptide reads, in one-letter code: Small ribosomal subunit protein uS4c (203 aa).

Positions 19–43 (PGLTNKSPKAGSDLRKQPRSRKKSQ) are disordered. Positions 89 to 152 (MRLDNILFRL…KSRTLIQNSL (64 aa)) constitute an S4 RNA-binding domain.

It belongs to the universal ribosomal protein uS4 family. As to quaternary structure, part of the 30S ribosomal subunit. Contacts protein S5. The interaction surface between S4 and S5 is involved in control of translational fidelity.

Its subcellular location is the plastid. It is found in the chloroplast. One of the primary rRNA binding proteins, it binds directly to 16S rRNA where it nucleates assembly of the body of the 30S subunit. Its function is as follows. With S5 and S12 plays an important role in translational accuracy. The polypeptide is Small ribosomal subunit protein uS4c (rps4) (Jasminum nudiflorum (Winter jasmine)).